Here is a 238-residue protein sequence, read N- to C-terminus: Ribonuclease PH (238 aa).

Phosphate contacts are provided by residues Arg86 and Gly124–Arg126.

This sequence belongs to the RNase PH family. As to quaternary structure, homohexameric ring arranged as a trimer of dimers.

The catalysed reaction is tRNA(n+1) + phosphate = tRNA(n) + a ribonucleoside 5'-diphosphate. Its function is as follows. Phosphorolytic 3'-5' exoribonuclease that plays an important role in tRNA 3'-end maturation. Removes nucleotide residues following the 3'-CCA terminus of tRNAs; can also add nucleotides to the ends of RNA molecules by using nucleoside diphosphates as substrates, but this may not be physiologically important. Probably plays a role in initiation of 16S rRNA degradation (leading to ribosome degradation) during starvation. The polypeptide is Ribonuclease PH (Nitrosospira multiformis (strain ATCC 25196 / NCIMB 11849 / C 71)).